Consider the following 203-residue polypeptide: LexA repressor (203 aa).

The H-T-H motif DNA-binding region spans 28–48 (RAEIASQLGFRSPNAAEEHLK). Residues S120 and K157 each act as for autocatalytic cleavage activity in the active site.

It belongs to the peptidase S24 family. In terms of assembly, homodimer.

The catalysed reaction is Hydrolysis of Ala-|-Gly bond in repressor LexA.. Its function is as follows. Represses a number of genes involved in the response to DNA damage (SOS response), including recA and lexA. Binds to the 16 bp palindromic sequence 5'-CTGTATATATATACAG-3'. In the presence of single-stranded DNA, RecA interacts with LexA causing an autocatalytic cleavage which disrupts the DNA-binding part of LexA, leading to derepression of the SOS regulon and eventually DNA repair. In Proteus mirabilis (strain HI4320), this protein is LexA repressor.